Reading from the N-terminus, the 172-residue chain is Hemagglutinin/amebocyte aggregation factor (172 aa).

The signal sequence occupies residues M1–A19. A run of 4 repeats spans residues V21–D25, E50–W54, V73–D77, and E102–W106. Disulfide bonds link C32/C58, C67/C172, C84/C110, C111/C117, and C123/C167. 2 consecutive repeat copies span residues V129–D133 and E158–W162.

It belongs to the dermatopontin family.

The protein localises to the secreted. Its function is as follows. Possesses the property of inducing both aggregation of amebocytes and agglutination of erythrocytes. The sequence is that of Hemagglutinin/amebocyte aggregation factor from Limulus polyphemus (Atlantic horseshoe crab).